Here is a 604-residue protein sequence, read N- to C-terminus: DNA polymerase alpha subunit B (604 aa).

The interval 109-171 (ETLLNSYTTP…KYSSRSNRGE (63 aa)) is disordered. Residues 113-141 (NSYTTPSKGSQKRTITTPETPLTKRSVSA) show a composition bias toward polar residues. Residues Thr129 and Thr132 each carry the phosphothreonine modification. 4 positions are modified to phosphoserine: Ser143, Ser149, Ser154, and Ser156. Residues 143-160 (SPHQLLSPSSFSPSATPP) are compositionally biased toward low complexity.

It belongs to the DNA polymerase alpha subunit B family. As to quaternary structure, component of the alpha DNA polymerase complex (also known as the alpha DNA polymerase-primase complex) consisting of four subunits: the catalytic subunit POLA1, the regulatory subunit POLA2, and the primase complex subunits PRIM1 and PRIM2 respectively. Within the complex, POLA1 directly interacts with PRIM2. Post-translationally, phosphorylated in a cell cycle-dependent manner, in G2/M phase.

Its subcellular location is the nucleus. Functionally, accessory subunit of the DNA polymerase alpha complex (also known as the alpha DNA polymerase-primase complex) which plays an essential role in the initiation of DNA synthesis. During the S phase of the cell cycle, the DNA polymerase alpha complex (composed of a catalytic subunit POLA1, an accessory subunit POLA2 and two primase subunits, the catalytic subunit PRIM1 and the regulatory subunit PRIM2) is recruited to DNA at the replicative forks via direct interactions with MCM10 and WDHD1. The primase subunit of the polymerase alpha complex initiates DNA synthesis by oligomerising short RNA primers on both leading and lagging strands. These primers are initially extended by the polymerase alpha catalytic subunit and subsequently transferred to polymerase delta and polymerase epsilon for processive synthesis on the lagging and leading strand, respectively. In Bos taurus (Bovine), this protein is DNA polymerase alpha subunit B (POLA2).